We begin with the raw amino-acid sequence, 305 residues long: Non-homologous end joining protein Ku (305 aa).

The region spanning 16–202 is the Ku domain; sequence SLVSFGISLI…KVDPEQLSLA (187 aa). The interval 263–305 is disordered; that stretch reads GEENGRKKSVSGAQHRSRRKSKGEQKLKVVRSGSSSDKRRKSA.

The protein belongs to the prokaryotic Ku family. As to quaternary structure, homodimer. Interacts with LigD.

In terms of biological role, with LigD forms a non-homologous end joining (NHEJ) DNA repair enzyme, which repairs dsDNA breaks with reduced fidelity. Binds linear dsDNA with 5'- and 3'- overhangs but not closed circular dsDNA nor ssDNA. Recruits and stimulates the ligase activity of LigD. This chain is Non-homologous end joining protein Ku, found in Acidobacterium capsulatum (strain ATCC 51196 / DSM 11244 / BCRC 80197 / JCM 7670 / NBRC 15755 / NCIMB 13165 / 161).